A 788-amino-acid polypeptide reads, in one-letter code: Choline transporter-like protein 1 (788 aa).

A helical transmembrane segment spans residues 98-118 (FLFFVFLCGWVVVASLGIMWG). N-linked (GlcNAc...) asparagine glycosylation is present at N276. A run of 4 helical transmembrane segments spans residues 329–349 (WWQT…WTVI), 352–372 (LLGS…LGFG), 409–429 (FVVA…ILFI), and 458–478 (LFPF…AIWL). N-linked (GlcNAc...) asparagine glycosylation occurs at N497. Transmembrane regions (helical) follow at residues 531–551 (LFAF…ALAG), 583–603 (LGSI…RVML), 620–640 (WFLM…KFLT), 679–699 (AGIL…ILSF), and 718–738 (YYFV…DLFF).

The protein belongs to the CTL (choline transporter-like) family.

It is found in the membrane. This Caenorhabditis briggsae protein is Choline transporter-like protein 1 (chtl-1).